We begin with the raw amino-acid sequence, 101 residues long: Non-histone chromosomal protein HMG-14 (101 aa).

The interval 1–101 (MPKRKVSSAE…EAEEKEAKSD (101 aa)) is disordered. Serine 7 bears the ADP-ribosylserine mark. Serine 8 is modified (phosphoserine). Lysine 14 bears the N6-acetyllysine mark. The residue at position 21 (serine 21) is a Phosphoserine. At serine 25 the chain carries ADP-ribosylserine; alternate. A Phosphoserine; alternate modification is found at serine 25. Lysine 27 is modified (N6-acetyllysine). Basic and acidic residues-rich tracts occupy residues 33–51 (VETKPKKAAGKDKSSDKKV) and 70–86 (ETKEDLPAENGETKNEE). Threonine 82 carries the post-translational modification Phosphothreonine. Lysine 83 is subject to N6-acetyllysine. Phosphoserine is present on residues serine 87, serine 90, and serine 100.

The protein belongs to the HMGN family. In terms of assembly, interacts with transcriptional regulator SEHBP. Phosphorylation on Ser-21 and Ser-25 weakens binding to nucleosomes and increases the rate of H3 phosphorylation.

Its subcellular location is the nucleus. Binds to the inner side of the nucleosomal DNA thus altering the interaction between the DNA and the histone octamer. May be involved in the process which maintains transcribable genes in a unique chromatin conformation. Inhibits the phosphorylation of nucleosomal histones H3 and H2A by RPS6KA5/MSK1 and RPS6KA3/RSK2. The chain is Non-histone chromosomal protein HMG-14 (HMGN1) from Bos taurus (Bovine).